Here is a 409-residue protein sequence, read N- to C-terminus: Putative integrase/recombinase y4rA (409 aa).

Positions 112-197 (SAVEQHVQAY…ALRSFLSYAR (86 aa)) constitute a Core-binding (CB) domain. Residues 220–402 (SIPRAIGRDD…DLDALRTLAL (183 aa)) enclose the Tyr recombinase domain. Residues Arg-260, Lys-284, His-354, Arg-357, and His-380 contribute to the active site. Tyr-389 acts as the O-(3'-phospho-DNA)-tyrosine intermediate in catalysis.

The protein belongs to the 'phage' integrase family.

This Sinorhizobium fredii (strain NBRC 101917 / NGR234) protein is Putative integrase/recombinase y4rA.